The following is a 381-amino-acid chain: Heme A synthase (381 aa).

The tract at residues 1–28 (MSNRTIFEEVSSDSKQQSSPTPGGIDRK) is disordered. 8 helical membrane passes run 36-56 (IRVWLAVLFALVVAMIAVGGL), 125-145 (VIGLIWALGFFGFLVTRSIPT), 151-171 (LLLPGILGGVQGAIGWWMVAS), 187-207 (LATHLGLAFVILGFLAWYMFL), 230-250 (STGLLHFAFLQILLGALVAGI), 287-307 (LVQFIHRVAGYLLFAFAVVVW), 320-340 (FAFNAVFAALSLQLVIGIVTV), and 344-364 (APVEIAIVHQAVAVLVWVLIL). Heme is bound at residue histidine 292. Residue histidine 352 coordinates heme.

The protein belongs to the COX15/CtaA family. Type 2 subfamily. In terms of assembly, interacts with CtaB. Heme b is required as a cofactor.

The protein resides in the cell membrane. It carries out the reaction Fe(II)-heme o + 2 A + H2O = Fe(II)-heme a + 2 AH2. It participates in porphyrin-containing compound metabolism; heme A biosynthesis; heme A from heme O: step 1/1. Its function is as follows. Catalyzes the conversion of heme O to heme A by two successive hydroxylations of the methyl group at C8. The first hydroxylation forms heme I, the second hydroxylation results in an unstable dihydroxymethyl group, which spontaneously dehydrates, resulting in the formyl group of heme A. The protein is Heme A synthase of Ruegeria sp. (strain TM1040) (Silicibacter sp.).